The following is a 98-amino-acid chain: Small ribosomal subunit protein bS20 (98 aa).

Residues M1–R15 are compositionally biased toward basic residues. Residues M1–R21 form a disordered region.

This sequence belongs to the bacterial ribosomal protein bS20 family.

In terms of biological role, binds directly to 16S ribosomal RNA. This Chlamydia felis (strain Fe/C-56) (Chlamydophila felis) protein is Small ribosomal subunit protein bS20.